The sequence spans 419 residues: Coiled-coil domain-containing protein 85C (419 aa).

Residue Ala2 is modified to N-acetylalanine. Coiled-coil stretches lie at residues 22–88 and 118–159; these read ELLR…RELC and HEVA…AALA. Disordered regions lie at residues 162 to 268 and 307 to 348; these read GAAS…DPSS and HSES…AGQK. Positions 164-175 are enriched in gly residues; that stretch reads ASGGGGGGGGAG. Over residues 176-189 the composition is skewed to low complexity; it reads SRSSIDSQASLSGP. Ser178 is modified (phosphoserine). The segment covering 224-233 has biased composition (pro residues); the sequence is PPPLLPPGPH. Ser246 bears the Phosphoserine mark. Polar residues predominate over residues 307-325; the sequence is HSESQLASLPPSYQDSLQN. Positions 329-338 are enriched in pro residues; sequence CPAPELPSPP.

This sequence belongs to the CCDC85 family. As to quaternary structure, may interact with ARVCF, CTNND1, CTNND2 and PKP4.

The protein localises to the cell junction. It is found in the tight junction. Its subcellular location is the adherens junction. May play a role in cell-cell adhesion and epithelium development through its interaction with proteins of the beta-catenin family. May play an important role in cortical development, especially in the maintenance of radial glia. The chain is Coiled-coil domain-containing protein 85C (CCDC85C) from Homo sapiens (Human).